Consider the following 736-residue polypeptide: Catalase-peroxidase (736 aa).

A compositionally biased stretch (basic and acidic residues) spans 1–10; that stretch reads MDAKTDDKGA. The disordered stretch occupies residues 1-26; it reads MDAKTDDKGAGKCPFSGGSHGHRNRD. Positions 96-218 form a cross-link, tryptophyl-tyrosyl-methioninium (Trp-Tyr) (with M-244); it reads WHSAGTYRIT…LGAVQMGLIY (123 aa). H97 functions as the Proton acceptor in the catalytic mechanism. The tryptophyl-tyrosyl-methioninium (Tyr-Met) (with W-96) cross-link spans 218 to 244; that stretch reads YVNPEGPNGNPDPVAAAKDIRETFARM. Heme b is bound at residue H259.

Belongs to the peroxidase family. Peroxidase/catalase subfamily. Homodimer or homotetramer. Heme b serves as cofactor. Formation of the three residue Trp-Tyr-Met cross-link is important for the catalase, but not the peroxidase activity of the enzyme.

It catalyses the reaction H2O2 + AH2 = A + 2 H2O. It carries out the reaction 2 H2O2 = O2 + 2 H2O. In terms of biological role, bifunctional enzyme with both catalase and broad-spectrum peroxidase activity. The protein is Catalase-peroxidase of Rhodopseudomonas palustris (strain ATCC BAA-98 / CGA009).